Here is a 607-residue protein sequence, read N- to C-terminus: Albumin (607 aa).

An N-terminal signal peptide occupies residues 1-18 (MKWVTFVSLLFLFSSAYF). Positions 19–24 (RGVLRR) are excised as a propeptide. Albumin domains are found at residues 19-209 (RGVL…DALK), 210-402 (ERIL…QFTP), and 403-600 (LVEE…KLVA). Histidine 27 is a binding site for Cu cation. Serine 29 is subject to Phosphoserine. Ca(2+) is bound by residues glutamate 30 and aspartate 37. Cysteine 77 and cysteine 86 are joined by a disulfide. Phosphoserine occurs at positions 82 and 89. A Zn(2+)-binding site is contributed by histidine 91. Disulfide bonds link cysteine 99-cysteine 115, cysteine 114-cysteine 125, cysteine 147-cysteine 192, cysteine 191-cysteine 200, cysteine 223-cysteine 269, and cysteine 268-cysteine 276. Residue threonine 107 is modified to Phosphothreonine. At lysine 228 the chain carries N6-succinyllysine. Glutamate 267 serves as a coordination point for Ca(2+). Zn(2+) contacts are provided by histidine 270 and aspartate 272. The Ca(2+) site is built by aspartate 272, glutamate 275, aspartate 278, and aspartate 282. Cystine bridges form between cysteine 288/cysteine 302, cysteine 301/cysteine 312, cysteine 339/cysteine 384, cysteine 383/cysteine 392, cysteine 415/cysteine 461, cysteine 460/cysteine 471, cysteine 484/cysteine 500, and cysteine 499/cysteine 510. Serine 442 bears the Phosphoserine mark. Phosphothreonine is present on residues threonine 443 and threonine 445. The residue at position 512 (serine 512) is a Phosphoserine. Cystine bridges form between cysteine 537/cysteine 582 and cysteine 581/cysteine 590. Lysine 557 bears the N6-methyllysine mark. The residue at position 569 (threonine 569) is a Phosphothreonine. N6-succinyllysine is present on lysine 587.

This sequence belongs to the ALB/AFP/VDB family. Interacts with FCGRT; this interaction regulates ALB homeostasis. Interacts with TASOR. In plasma, occurs in a covalently-linked complex with chromophore-bound alpha-1-microglobulin; this interaction does not prevent fatty acid binding to ALB. In terms of processing, phosphorylated by FAM20C in the extracellular medium. In terms of tissue distribution, plasma.

It localises to the secreted. Binds water, Ca(2+), Na(+), K(+), fatty acids, hormones, bilirubin and drugs. Its main function is the regulation of the colloidal osmotic pressure of blood. Major zinc transporter in plasma, typically binds about 80% of all plasma zinc. Major calcium and magnesium transporter in plasma, binds approximately 45% of circulating calcium and magnesium in plasma. Potentially has more than two calcium-binding sites and might additionally bind calcium in a non-specific manner. The shared binding site between zinc and calcium at residue Asp-272 suggests a crosstalk between zinc and calcium transport in the blood. The rank order of affinity is zinc &gt; calcium &gt; magnesium. Binds to the bacterial siderophore enterobactin and inhibits enterobactin-mediated iron uptake of E.coli from ferric transferrin, and may thereby limit the utilization of iron and growth of enteric bacteria such as E.coli. Does not prevent iron uptake by the bacterial siderophore aerobactin. This chain is Albumin (ALB), found in Equus asinus (Donkey).